The sequence spans 292 residues: Phosphatidylserine decarboxylase proenzyme (292 aa).

Active-site charge relay system; for autoendoproteolytic cleavage activity residues include Asp92, His149, and Ser255. Residue Ser255 is the Schiff-base intermediate with substrate; via pyruvic acid; for decarboxylase activity of the active site. Position 255 is a pyruvic acid (Ser); by autocatalysis (Ser255).

The protein belongs to the phosphatidylserine decarboxylase family. PSD-B subfamily. Prokaryotic type I sub-subfamily. In terms of assembly, heterodimer of a large membrane-associated beta subunit and a small pyruvoyl-containing alpha subunit. Pyruvate is required as a cofactor. In terms of processing, is synthesized initially as an inactive proenzyme. Formation of the active enzyme involves a self-maturation process in which the active site pyruvoyl group is generated from an internal serine residue via an autocatalytic post-translational modification. Two non-identical subunits are generated from the proenzyme in this reaction, and the pyruvate is formed at the N-terminus of the alpha chain, which is derived from the carboxyl end of the proenzyme. The autoendoproteolytic cleavage occurs by a canonical serine protease mechanism, in which the side chain hydroxyl group of the serine supplies its oxygen atom to form the C-terminus of the beta chain, while the remainder of the serine residue undergoes an oxidative deamination to produce ammonia and the pyruvoyl prosthetic group on the alpha chain. During this reaction, the Ser that is part of the protease active site of the proenzyme becomes the pyruvoyl prosthetic group, which constitutes an essential element of the active site of the mature decarboxylase.

The protein localises to the cell membrane. The catalysed reaction is a 1,2-diacyl-sn-glycero-3-phospho-L-serine + H(+) = a 1,2-diacyl-sn-glycero-3-phosphoethanolamine + CO2. The protein operates within phospholipid metabolism; phosphatidylethanolamine biosynthesis; phosphatidylethanolamine from CDP-diacylglycerol: step 2/2. In terms of biological role, catalyzes the formation of phosphatidylethanolamine (PtdEtn) from phosphatidylserine (PtdSer). The sequence is that of Phosphatidylserine decarboxylase proenzyme from Idiomarina loihiensis (strain ATCC BAA-735 / DSM 15497 / L2-TR).